The primary structure comprises 254 residues: 3-dehydroquinate dehydratase (254 aa).

3-dehydroquinate contacts are provided by residues 47–49 and Arg-83; that span reads EFR. His-144 serves as the catalytic Proton donor/acceptor. Residue Lys-171 is the Schiff-base intermediate with substrate of the active site. 3-dehydroquinate is bound by residues Arg-213, Ser-232, and Gln-236.

The protein belongs to the type-I 3-dehydroquinase family. Homodimer.

The enzyme catalyses 3-dehydroquinate = 3-dehydroshikimate + H2O. It participates in metabolic intermediate biosynthesis; chorismate biosynthesis; chorismate from D-erythrose 4-phosphate and phosphoenolpyruvate: step 3/7. Functionally, involved in the third step of the chorismate pathway, which leads to the biosynthesis of aromatic amino acids. Catalyzes the cis-dehydration of 3-dehydroquinate (DHQ) and introduces the first double bond of the aromatic ring to yield 3-dehydroshikimate. The sequence is that of 3-dehydroquinate dehydratase from Neisseria meningitidis serogroup C / serotype 2a (strain ATCC 700532 / DSM 15464 / FAM18).